Here is a 456-residue protein sequence, read N- to C-terminus: tRNA-2-methylthio-N(6)-dimethylallyladenosine synthase (456 aa).

In terms of domain architecture, MTTase N-terminal spans 19 to 136 (LTFNVQTFGC…LAELIYARHT (118 aa)). [4Fe-4S] cluster is bound by residues Cys-28, Cys-63, Cys-97, Cys-173, Cys-177, and Cys-180. The Radical SAM core domain maps to 159–389 (QKYKFKAGVN…LTTIRESSSK (231 aa)). One can recognise a TRAM domain in the interval 392–455 (KDDEGKIAEV…GFYYMGEMME (64 aa)).

Belongs to the methylthiotransferase family. MiaB subfamily. As to quaternary structure, monomer. The cofactor is [4Fe-4S] cluster.

It localises to the cytoplasm. It catalyses the reaction N(6)-dimethylallyladenosine(37) in tRNA + (sulfur carrier)-SH + AH2 + 2 S-adenosyl-L-methionine = 2-methylsulfanyl-N(6)-dimethylallyladenosine(37) in tRNA + (sulfur carrier)-H + 5'-deoxyadenosine + L-methionine + A + S-adenosyl-L-homocysteine + 2 H(+). Its function is as follows. Catalyzes the methylthiolation of N6-(dimethylallyl)adenosine (i(6)A), leading to the formation of 2-methylthio-N6-(dimethylallyl)adenosine (ms(2)i(6)A) at position 37 in tRNAs that read codons beginning with uridine. The polypeptide is tRNA-2-methylthio-N(6)-dimethylallyladenosine synthase (Lachnoclostridium phytofermentans (strain ATCC 700394 / DSM 18823 / ISDg) (Clostridium phytofermentans)).